The chain runs to 522 residues: Maturase K (522 aa).

The protein belongs to the intron maturase 2 family. MatK subfamily.

It is found in the plastid. The protein localises to the chloroplast. Usually encoded in the trnK tRNA gene intron. Probably assists in splicing its own and other chloroplast group II introns. The protein is Maturase K of Dianella ensifolia (Flax lily).